Here is a 532-residue protein sequence, read N- to C-terminus: Cytochrome P450 monooxygenase pgmC (532 aa).

A helical membrane pass occupies residues 15–32 (ISTLAVLIGFIALLTAWL). A heme-binding site is contributed by Cys-438.

Belongs to the cytochrome P450 family. The cofactor is heme.

It is found in the membrane. It participates in pigment biosynthesis. The protein operates within secondary metabolite biosynthesis. Functionally, cytochrome P450 monooxygenase; part of the gene cluster that mediates the biosynthesis of pleosporalin A, ascomycone A, as well as a third cryptic naphthoquinone derived pigment, all responsible for the coloration of conidia. Involved in the oxidation of fusarubinaldehyde at C-9. PgmC has low substrate-specificity and is also able to use the pgmA product 3-acetonyl-1,6,8-trihydroxy-2-naphthaldehyde as a substrate. The pathway begins with the biosynthesis of the cyclized heptaketide 3-acetonyl-1,6,8-trihydroxy-2-naphthaldehyde by the NR-PKS pgmA. The C-6 hydroxyl group is further methylated by the O-methyltransferase pgmB to yield fusarubinaldehyde which is in turn oxidized by the cytochrome P450 monooxygenase pgmC at C-9. The C-1 hydroxyl group is then methylated spontaneously. Although pgmE, pgmD and pgmH are essential for the production of pleosporalin A, it is not the case for the 2 other final products and it remains difficult to assign a specific function to each enzyme. PgmF and pgmG seem not to be involved in pigment biosynthesis although they were regulated by the cluster-specific transcription factor pgmR. In Aspergillus terreus (strain NIH 2624 / FGSC A1156), this protein is Cytochrome P450 monooxygenase pgmC.